Here is a 490-residue protein sequence, read N- to C-terminus: Cytochrome P450 71B28 (490 aa).

Residues 1 to 21 (MSVFLCFLCLLPLILIFLKNL) traverse the membrane as a helical segment. Cysteine 440 is a binding site for heme.

This sequence belongs to the cytochrome P450 family. The cofactor is heme.

The protein resides in the membrane. In Arabidopsis thaliana (Mouse-ear cress), this protein is Cytochrome P450 71B28 (CYP71B28).